A 233-amino-acid polypeptide reads, in one-letter code: Lipoprotein-releasing system ATP-binding protein LolD (233 aa).

In terms of domain architecture, ABC transporter spans 7 to 233 (IHCEKLSKTY…QLQSESERNH (227 aa)). 43–50 (GASGAGKS) lines the ATP pocket.

The protein belongs to the ABC transporter superfamily. Lipoprotein translocase (TC 3.A.1.125) family. As to quaternary structure, the complex is composed of two ATP-binding proteins (LolD) and two transmembrane proteins (LolC and LolE).

The protein resides in the cell inner membrane. In terms of biological role, part of the ABC transporter complex LolCDE involved in the translocation of mature outer membrane-directed lipoproteins, from the inner membrane to the periplasmic chaperone, LolA. Responsible for the formation of the LolA-lipoprotein complex in an ATP-dependent manner. The protein is Lipoprotein-releasing system ATP-binding protein LolD of Coxiella burnetii (strain RSA 493 / Nine Mile phase I).